A 210-amino-acid polypeptide reads, in one-letter code: Dephospho-CoA kinase (210 aa).

One can recognise a DPCK domain in the interval I4–N201. Position 12 to 17 (C12 to T17) interacts with ATP.

Belongs to the CoaE family.

Its subcellular location is the cytoplasm. The catalysed reaction is 3'-dephospho-CoA + ATP = ADP + CoA + H(+). It functions in the pathway cofactor biosynthesis; coenzyme A biosynthesis; CoA from (R)-pantothenate: step 5/5. Its function is as follows. Catalyzes the phosphorylation of the 3'-hydroxyl group of dephosphocoenzyme A to form coenzyme A. The chain is Dephospho-CoA kinase from Buchnera aphidicola subsp. Schizaphis graminum (strain Sg).